The sequence spans 485 residues: UDP-glycosyltransferase 91D1 (485 aa).

UDP-alpha-D-glucose-binding positions include Ser-296, 355 to 356 (WA), 373 to 381 (HCGSGSIVE), and 395 to 398 (FCDQ).

The protein belongs to the UDP-glycosyltransferase family.

May glycosylate diterpenes or flavonols in leaves. This is UDP-glycosyltransferase 91D1 from Stevia rebaudiana (Stevia).